The following is a 518-amino-acid chain: ATP synthase F(1) complex catalytic subunit beta, mitochondrial (518 aa).

Positions 199, 200, 201, 202, 203, and 204 each coordinate ADP. Gly-199 is an ATP binding site. Residues Gly-199, Val-200, Gly-201, Lys-202, and Thr-203 each contribute to the phosphate site. ATP-binding residues include Gly-201, Lys-202, Thr-203, and Val-204. Thr-203 contacts Mg(2+). A Mg(2+)-binding site is contributed by Glu-228. Arg-229 is an ATP binding site.

The protein belongs to the ATPase alpha/beta chains family. Homotrimer. Component of the ATP synthase complex composed at least of ATP5F1A/subunit alpha, ATP5F1B/subunit beta, ATP5MC1/subunit c (homooctomer), MT-ATP6/subunit a, MT-ATP8/subunit 8, ATP5ME/subunit e, ATP5MF/subunit f, ATP5MG/subunit g, ATP5MK/subunit k, ATP5MJ/subunit j, ATP5F1C/subunit gamma, ATP5F1D/subunit delta, ATP5F1E/subunit epsilon, ATP5PF/subunit F6, ATP5PB/subunit b, ATP5PD/subunit d, ATP5PO/subunit OSCP. ATP synthase complex consists of a soluble F(1) head domain (subunits alpha(3) and beta(3)) - the catalytic core - and a membrane F(0) domain - the membrane proton channel (subunits c, a, 8, e, f, g, k and j). These two domains are linked by a central stalk (subunits gamma, delta, and epsilon) rotating inside the F1 region and a stationary peripheral stalk (subunits F6, b, d, and OSCP).

The protein resides in the mitochondrion inner membrane. The enzyme catalyses ATP + H2O + 4 H(+)(in) = ADP + phosphate + 5 H(+)(out). In terms of biological role, catalytic subunit beta, of the mitochondrial membrane ATP synthase complex (F(1)F(0) ATP synthase or Complex V) that produces ATP from ADP in the presence of a proton gradient across the membrane which is generated by electron transport complexes of the respiratory chain. ATP synthase complex consist of a soluble F(1) head domain - the catalytic core - and a membrane F(1) domain - the membrane proton channel. These two domains are linked by a central stalk rotating inside the F(1) region and a stationary peripheral stalk. During catalysis, ATP synthesis in the catalytic domain of F(1) is coupled via a rotary mechanism of the central stalk subunits to proton translocation. In vivo, can only synthesize ATP although its ATP hydrolase activity can be activated artificially in vitro. With the subunit alpha (ATP5F1A), forms the catalytic core in the F(1) domain. This is ATP synthase F(1) complex catalytic subunit beta, mitochondrial from Cyprinus carpio (Common carp).